Consider the following 148-residue polypeptide: MEVLIIIFGIILDRITKLWALKELSSGHEIEIIKNFFSFNYLENRGAAFGIFQGKTVLLVLVTLLIMIGVIYYFIKYRPTSRFMRIGVSFIVSGALGNLYDRIFYKYVVDFILIHYKNVYYYPTFNIADILVVVGTIMLAIFLLREGK.

2 consecutive transmembrane segments (helical) span residues 57 to 77 (VLLV…FIKY) and 88 to 105 (VSFI…RIFY). Catalysis depends on residues aspartate 110 and aspartate 129. Residues 124–144 (TFNIADILVVVGTIMLAIFLL) form a helical membrane-spanning segment.

This sequence belongs to the peptidase A8 family.

The protein resides in the cell membrane. The catalysed reaction is Release of signal peptides from bacterial membrane prolipoproteins. Hydrolyzes -Xaa-Yaa-Zaa-|-(S,diacylglyceryl)Cys-, in which Xaa is hydrophobic (preferably Leu), and Yaa (Ala or Ser) and Zaa (Gly or Ala) have small, neutral side chains.. It participates in protein modification; lipoprotein biosynthesis (signal peptide cleavage). Functionally, this protein specifically catalyzes the removal of signal peptides from prolipoproteins. The protein is Lipoprotein signal peptidase of Clostridium novyi (strain NT).